We begin with the raw amino-acid sequence, 215 residues long: Adenylate kinase (215 aa).

10-15 (GAGKGT) contributes to the ATP binding site. An NMP region spans residues 30–59 (STGDMLRAAVKAGTELGLIAKSVMDSGGLV). AMP-binding positions include threonine 31, arginine 36, 57-59 (GLV), 85-88 (GFPR), and glutamine 92. Residues 122-159 (GRRVHEASGRVYHTVYNPPKVEGKDDVTGDDLVQRKDD) are LID. ATP-binding positions include arginine 123 and 132-133 (VY). Residues arginine 156 and arginine 167 each contribute to the AMP site. ATP is bound at residue glycine 201.

This sequence belongs to the adenylate kinase family. As to quaternary structure, monomer.

Its subcellular location is the cytoplasm. It carries out the reaction AMP + ATP = 2 ADP. The protein operates within purine metabolism; AMP biosynthesis via salvage pathway; AMP from ADP: step 1/1. Its function is as follows. Catalyzes the reversible transfer of the terminal phosphate group between ATP and AMP. Plays an important role in cellular energy homeostasis and in adenine nucleotide metabolism. In Pseudomonas fluorescens (strain SBW25), this protein is Adenylate kinase.